Reading from the N-terminus, the 130-residue chain is Leptin receptor gene-related protein (130 aa).

4 consecutive transmembrane segments (helical) span residues Leu7–Leu27, Gln32–Ala52, Leu68–Ala88, and Gly99–Phe119.

This sequence belongs to the OB-RGRP/VPS55 family.

The protein localises to the golgi apparatus membrane. It localises to the endosome membrane. Its function is as follows. Involved in protein trafficking. May be involved in the down-regulation of membrane protein levels. This is Leptin receptor gene-related protein (leprot) from Danio rerio (Zebrafish).